A 64-amino-acid polypeptide reads, in one-letter code: Metallothionein (64 aa).

The protein belongs to the metallothionein superfamily. Type 4 family.

Its function is as follows. Metallothioneins have a high content of cysteine residues that bind various heavy metals. In Sterechinus neumayeri (Antarctic sea urchin), this protein is Metallothionein.